We begin with the raw amino-acid sequence, 188 residues long: Elongation factor P (188 aa).

The protein belongs to the elongation factor P family.

The protein resides in the cytoplasm. It functions in the pathway protein biosynthesis; polypeptide chain elongation. Functionally, involved in peptide bond synthesis. Stimulates efficient translation and peptide-bond synthesis on native or reconstituted 70S ribosomes in vitro. Probably functions indirectly by altering the affinity of the ribosome for aminoacyl-tRNA, thus increasing their reactivity as acceptors for peptidyl transferase. The chain is Elongation factor P from Bifidobacterium longum (strain DJO10A).